We begin with the raw amino-acid sequence, 1338 residues long: Terpene cyclase-glycosyl transferase fusion protein fsoA (1338 aa).

The segment at 1-687 (MDMAPDELDE…RFLDRTDEPD (687 aa)) is terpenne cyclase. 3 PFTB repeats span residues 19–61 (LEQA…PALN), 69–111 (AAAL…RLLG), and 267–307 (LRRC…SLEH). The Proton donor role is filled by Asp412. 3 PFTB repeats span residues 434–475 (VEMG…DSLV), 515–556 (AQKA…AFCG), and 564–615 (ALRA…LRFR). The glycosyltransferase stretch occupies residues 688–1338 (QDRDLPLLMT…NMLLGEGCQG (651 aa)).

In the N-terminal section; belongs to the terpene cyclase/mutase family. The protein in the C-terminal section; belongs to the glycosyltransferase 28 family.

The enzyme catalyses (S)-2,3-epoxysqualene = isomotiol. The catalysed reaction is isomotiol + UDP-alpha-D-glucose = 3-O-(beta-D-glucopyranosyl)-isomotiol + UDP + H(+). It catalyses the reaction 2alpha-hydroxyisomotiol + UDP-alpha-D-glucose = 3-O-(beta-D-glucopyranosyl)-2alpha-hydroxyisomotiol + UDP + H(+). Its pathway is secondary metabolite biosynthesis; terpenoid biosynthesis. Terpene cyclase-glycosyl transferase fusion protein; part of the gene cluster that mediates the biosynthesis of the enfumafungin-type antibiotic, fuscoatroside. Within the pathway, fsoA plays two important roles, the cyclization of 2,3(S)-oxidosqualene into isomotiol via its terpene cyclase (TC) domain and the C3 glycosylation of several intermediates via its glycosyltransferase (GT) domain. The fuscoatroside biosynthesis is initiated by the cyclization of 2,3(S)-oxidosqualene through FsoA's TC domain, leading to the formation of the fernane skeleton isomotiol, harboring a fernane triterpene skeleton with a C8-C9 double bond. Subsequently, C2-alpha-hydroxylation mediated by fsoD results in the production of 2-alpha-hydroxy-isomotiol, which is further acetylated by fsoF. The GT domain of FsoA may convert isomotiol, 2-alpha-hydroxy-isomotiol, and the acetylated derivative of 2-alpha-hydroxy-isomotiol into their corresponding glycosides 3-O-(beta-D-glucopyranosyl)-isomotiol, 3-O-(beta-D-glucopyranosyl)-2-alpha-hydroxy-isomotiol, and 3-O-(beta-D-glucopyranosyl)-2-alpha-acetoxy-isomotiol, which then undergo oxidative cleavage under the action of fsoE to form s 2-deacetoxy-fuscoatroside, 2-deacetyl-fuscoatroside, and fuscoatroside, respectively. Although hydroxylation followed by acetylation of 3-O-(beta-D-glucopyranosyl)-isomotiol and 2-deacetoxy-fuscoatroside by fsoD and fsoF could not be ruled out, this process is likely to occur with difficulty due to bulky steric hindrance caused by the presence of a glycan at C3 in these compounds. Interestingly, fsoE can also utilize the aglycones isomotiol and 2-alpha-hydroxy-isomotiol as substrates to generate 19-beta-hydroxy-isomotiol and 2-alpha,19-beta-dihydroxy-isomotiol, respectively. These reactions occur with lower efficiency. Finally, fsoE can further convert 2-alpha,19-beta-dihydroxy-isomotiol into 2-alpha-hydroxy-ismotiol-19-one and 2-alpha-hydroxy-ismotiol-19-one into 2-deacetyl-3-deglucopyranosyl-fuscoatroside. The protein is Terpene cyclase-glycosyl transferase fusion protein fsoA of Humicola fuscoatra.